The primary structure comprises 67 residues: ATP synthase F(0) complex subunit 8 (67 aa).

Residues threonine 8–phenylalanine 24 form a helical membrane-spanning segment. Residue lysine 54 is modified to N6-acetyllysine; alternate. At lysine 54 the chain carries N6-succinyllysine; alternate. Lysine 57 carries the N6-acetyllysine modification.

It belongs to the ATPase protein 8 family. In terms of assembly, component of the ATP synthase complex composed at least of ATP5F1A/subunit alpha, ATP5F1B/subunit beta, ATP5MC1/subunit c (homooctomer), MT-ATP6/subunit a, MT-ATP8/subunit 8, ATP5ME/subunit e, ATP5MF/subunit f, ATP5MG/subunit g, ATP5MK/subunit k, ATP5MJ/subunit j, ATP5F1C/subunit gamma, ATP5F1D/subunit delta, ATP5F1E/subunit epsilon, ATP5PF/subunit F6, ATP5PB/subunit b, ATP5PD/subunit d, ATP5PO/subunit OSCP. ATP synthase complex consists of a soluble F(1) head domain (subunits alpha(3) and beta(3)) - the catalytic core - and a membrane F(0) domain - the membrane proton channel (subunits c, a, 8, e, f, g, k and j). These two domains are linked by a central stalk (subunits gamma, delta, and epsilon) rotating inside the F1 region and a stationary peripheral stalk (subunits F6, b, d, and OSCP). Interacts with PRICKLE3.

It localises to the mitochondrion membrane. Subunit 8, of the mitochondrial membrane ATP synthase complex (F(1)F(0) ATP synthase or Complex V) that produces ATP from ADP in the presence of a proton gradient across the membrane which is generated by electron transport complexes of the respiratory chain. ATP synthase complex consist of a soluble F(1) head domain - the catalytic core - and a membrane F(1) domain - the membrane proton channel. These two domains are linked by a central stalk rotating inside the F(1) region and a stationary peripheral stalk. During catalysis, ATP synthesis in the catalytic domain of F(1) is coupled via a rotary mechanism of the central stalk subunits to proton translocation. In vivo, can only synthesize ATP although its ATP hydrolase activity can be activated artificially in vitro. Part of the complex F(0) domain. The polypeptide is ATP synthase F(0) complex subunit 8 (Dugong dugon (Dugong)).